The sequence spans 142 residues: VLSAADKNNVKGAWEKVGTHAGEYGAEALERMFLSFPTTKTYFPHFDLTHGSAQVKAHGQKVGAALTKAVGHLDDLPNALSDLSDLHAHKLRVDPVNFKLLSHCLLVTLSRHLPEQEFTPAVHASLDKFFSNVSTVLTSKYR.

The Globin domain maps to 1 to 142; that stretch reads VLSAADKNNV…VSTVLTSKYR (142 aa). Serine 3 is subject to Phosphoserine. 2 positions are modified to N6-succinyllysine: lysine 7 and lysine 11. At lysine 16 the chain carries N6-acetyllysine; alternate. Lysine 16 is modified (N6-succinyllysine; alternate). The residue at position 24 (tyrosine 24) is a Phosphotyrosine. The residue at position 35 (serine 35) is a Phosphoserine. Lysine 40 carries the N6-succinyllysine modification. Histidine 58 serves as a coordination point for O2. Histidine 87 provides a ligand contact to heme b. Serine 102 is subject to Phosphoserine. Threonine 108 is modified (phosphothreonine). Serine 125 is subject to Phosphoserine. Phosphothreonine occurs at positions 135 and 138. Serine 139 is subject to Phosphoserine.

This sequence belongs to the globin family. Heterotetramer of two alpha chains and two beta chains. Red blood cells.

Functionally, involved in oxygen transport from the lung to the various peripheral tissues. Hemopressin acts as an antagonist peptide of the cannabinoid receptor CNR1. Hemopressin-binding efficiently blocks cannabinoid receptor CNR1 and subsequent signaling. In Procavia capensis habessinica (Abyssinian hyrax), this protein is Hemoglobin subunit alpha (HBA).